A 185-amino-acid polypeptide reads, in one-letter code: Elongation factor P (185 aa).

It belongs to the elongation factor P family.

The protein resides in the cytoplasm. It participates in protein biosynthesis; polypeptide chain elongation. Functionally, involved in peptide bond synthesis. Stimulates efficient translation and peptide-bond synthesis on native or reconstituted 70S ribosomes in vitro. Probably functions indirectly by altering the affinity of the ribosome for aminoacyl-tRNA, thus increasing their reactivity as acceptors for peptidyl transferase. The protein is Elongation factor P of Deinococcus deserti (strain DSM 17065 / CIP 109153 / LMG 22923 / VCD115).